A 238-amino-acid chain; its full sequence is Proenkephalin-A (238 aa).

An N-terminal signal peptide occupies residues 1–25 (MAASALSTCLWMLVLGTCVSLVVGT). 3 disulfide bridges follow: C27-C50, C31-C54, and C34-C66. The segment at 76-103 (QSPLASQQDQERVDAMMADEEDATSPEH) is disordered. Propeptides lie at residues 124 to 167 (SSAS…AEAV), 177 to 195 (ADRG…GRVL), and 206 to 230 (VGRP…SELQ).

This sequence belongs to the opioid neuropeptide precursor family. As to expression, expressed by the venom gland. Moderately expressed in the venom gland transcriptome.

It localises to the secreted. In terms of biological role, met-enkephalins compete with and mimic the effects of opiate drugs. They play a role in a number of physiologic functions, including pain perception and responses to stress. Enkephalin peptides found in Meiacanthus fangblennies induce physiological effects via their interaction with delta-type opioid receptors (OPRD1) (tested on M.grammistes). Therefore, finding a proenkephalin sequence in M.atrodorsalis venom suggests that this protein act in the same manner. The chain is Proenkephalin-A from Meiacanthus atrodorsalis (Forktail blenny).